We begin with the raw amino-acid sequence, 78 residues long: Mu-conotoxin BuIIIB (78 aa).

The N-terminal stretch at 1-22 (MMSKLGVLLTICLLLFPLFALP) is a signal peptide. A propeptide spanning residues 23–51 (QDGDQPADRPAERMQDDISSEQNPLLEKR) is cleaved from the precursor. The interval 26–46 (DQPADRPAERMQDDISSEQNP) is disordered. The segment covering 28-38 (PADRPAERMQD) has biased composition (basic and acidic residues). Intrachain disulfides connect C56–C68, C57–C74, and C64–C75. C75 carries the cysteine amide modification.

It belongs to the conotoxin M superfamily. Expressed by the venom duct.

Its subcellular location is the secreted. Mu-conotoxins block voltage-gated sodium channels (Nav). This synthetic toxin potently blocks rNav1.4/SCN4A (Kd=0.34-3.6 nM), rNav1.2/SCN2A (Kd=13 nM), rNav1.3/SCN3A (Kd=200 nM), rNav1.1/SCN1A (Kd=360 nM), mNav1.6/SCN8A (IC(50)=1.8 uM), rNav1.5/SCN5A (IC(50)=9 uM), rNav1.6/SCN8A (IC(50)&gt;30 uM). It is noteworthy that the toxin is 50-fold more potent on mouse Nav1.6 than on rat Nav1.6. The block of SCN4A is very slowly reversible. The chain is Mu-conotoxin BuIIIB from Conus bullatus (Bubble cone).